A 37-amino-acid chain; its full sequence is Large ribosomal subunit protein bL36 (37 aa).

Belongs to the bacterial ribosomal protein bL36 family.

The chain is Large ribosomal subunit protein bL36 from Clostridioides difficile (strain 630) (Peptoclostridium difficile).